Consider the following 363-residue polypeptide: Peptide chain release factor 2 (363 aa).

At glutamine 251 the chain carries N5-methylglutamine.

This sequence belongs to the prokaryotic/mitochondrial release factor family. Methylated by PrmC. Methylation increases the termination efficiency of RF2.

It localises to the cytoplasm. Peptide chain release factor 2 directs the termination of translation in response to the peptide chain termination codons UGA and UAA. This is Peptide chain release factor 2 from Helicobacter acinonychis (strain Sheeba).